A 462-amino-acid polypeptide reads, in one-letter code: Chitinase 1 (462 aa).

Residues 1-17 (MILNLIILLAISIVASA) form the signal peptide. The 274-residue stretch at 18 to 291 (SNIAAYWGQN…NQLYQALSGS (274 aa)) folds into the GH18 domain. A glycan (N-linked (GlcNAc...) asparagine) is linked at Asn57. The active-site Proton donor is the Glu147.

Belongs to the glycosyl hydrolase 18 family. Chitinase class III subfamily.

It is found in the secreted. It carries out the reaction Random endo-hydrolysis of N-acetyl-beta-D-glucosaminide (1-&gt;4)-beta-linkages in chitin and chitodextrins.. The sequence is that of Chitinase 1 (CHT1) from Candida albicans (Yeast).